Here is a 523-residue protein sequence, read N- to C-terminus: Calcium-dependent protein kinase 1 (523 aa).

The disordered stretch occupies residues 1 to 36 (MGCNQSKSANDVRGNKVNHVNSKKKNNKREDTNDGE). A lipid anchor (N-myristoyl glycine) is attached at Gly-2. Residue Cys-3 is the site of S-palmitoyl cysteine attachment. The Protein kinase domain maps to 57–324 (YFKVRKLGSG…AEEALNSRWI (268 aa)). ATP-binding positions include 63 to 71 (LGSGAYGEV), Lys-86, and Lys-90. Ser-65 carries the post-translational modification Phosphoserine. A Phosphoserine modification is found at Ser-117. Asp-190 (proton acceptor) is an active-site residue. Ser-216 and Ser-219 each carry phosphoserine. Thr-230 carries the phosphothreonine modification. Ser-334 is subject to Phosphoserine. The J domain autoinhibitory motif signature appears at 345 to 352 (NMRKFEGS). Residues 345-363 (NMRKFEGSQKLAQAAILFI) are j domain. The J domain interacts with the EF-hand domains motif lies at 353–363 (QKLAQAAILFI). 4 consecutive EF-hand domains span residues 371-406 (EERKELTDIFKKLDKNGDGQLDKKELIEGYNVLRNF), 415-450 (NVEEEVDNILKEVDFDKNGYIEYSEFISVCMDKQIL), 451-486 (FSEERLRRAFNLFDTDKSGKITKEELANLFGLTSIS), and 487-520 (EKTWNDVLGEADQNKDNMIDFDEFVSMMHKICDH). Ca(2+)-binding residues include Asp-384, Asn-386, Asp-388, Gln-390, Glu-395, Asp-428, Asp-430, Asn-432, Tyr-434, Glu-439, Asp-464, Asp-466, Ser-468, Lys-470, Glu-475, Asp-498, Asn-500, Asp-502, Met-504, and Glu-509.

The protein belongs to the protein kinase superfamily. Ser/Thr protein kinase family. CDPK subfamily. In terms of assembly, monomer. Requires Mg(2+) as cofactor. Post-translationally, myristoylated. Myristoylation and palmitoylation are required for the localization to the parasitophorous vacuole membrane. Palmitoylated. Palmitoylation increases in merozoites in response to low level of extracellular K(+) in the host blood. Myristoylation and palmitoylation are required for the localization to the parasitophorous vacuole membrane. In terms of processing, phosphorylation at Thr-230 may regulate CDPK1 kinase activity. Phosphorylation increases in response to an increase in intracellular Ca(2+) levels. Autophosphorylated in vitro. Autophosphorylation does not affect membrane localization in vitro.

It is found in the membrane. It localises to the cell membrane. The protein localises to the parasitophorous vacuole membrane. Its subcellular location is the cytoplasm. The protein resides in the cell projection. It is found in the cilium. It localises to the flagellum. The protein localises to the host cell membrane. The enzyme catalyses L-seryl-[protein] + ATP = O-phospho-L-seryl-[protein] + ADP + H(+). The catalysed reaction is L-threonyl-[protein] + ATP = O-phospho-L-threonyl-[protein] + ADP + H(+). Its activity is regulated as follows. Activated by calcium. Upon calcium binding to the EF-hand domains, the C-terminus of the junction domain (J domain) undergoes a conformational change which results in the dissociation of the pseudo-substrate inhibitory motif from the catalytic domain. This, in turn may facilitate the autophosphorylation of the activation loop at Thr-230, which leads to the kinase activation. Functionally, calcium-dependent protein kinase which acts as a sensor and effector of intracellular Ca(2+) levels probably in part downstream of cGMP-activated PKG kinase. During the liver stage, involved in sporozoite motility and thus in sporozoite invasion of host hepatocytes, probably together with CDPK4 and CDPK5. In the mosquito midgut and during the last stage of male gamete exflagellation, may play a role in the rupture of the host erythrocyte membrane. In the mosquito midgut, required for the differentiation of the zygote into the ookinete by promoting the translational activation of a subset of repressed mRNAs; these mRNAs are kept repressed in the zygote by the DOZI- or CITH-containing mRNP complexes. Dispensable during the asexual blood stage. The chain is Calcium-dependent protein kinase 1 from Plasmodium berghei (strain Anka).